The chain runs to 121 residues: MIQSQTLLNVADNSGARKLMCIRIVGASNQRYAHIGDVIVAVIKEAKPTSALKRSEVIKAVIVRTCKEFKCDDGMIIRYDDNAAVVINKDRNPVGTRIFGAIPLELHQNFDKIVSLAREVI.

The protein belongs to the universal ribosomal protein uL14 family. As to quaternary structure, part of the 50S ribosomal subunit.

It is found in the plastid. It localises to the chloroplast. Functionally, binds to 23S rRNA. This chain is Large ribosomal subunit protein uL14c, found in Pelargonium hortorum (Common geranium).